A 132-amino-acid chain; its full sequence is Small ribosomal subunit protein uS8 (132 aa).

Belongs to the universal ribosomal protein uS8 family. In terms of assembly, part of the 30S ribosomal subunit. Contacts proteins S5 and S12.

In terms of biological role, one of the primary rRNA binding proteins, it binds directly to 16S rRNA central domain where it helps coordinate assembly of the platform of the 30S subunit. The chain is Small ribosomal subunit protein uS8 from Rhizobium johnstonii (strain DSM 114642 / LMG 32736 / 3841) (Rhizobium leguminosarum bv. viciae).